The following is a 288-amino-acid chain: Pyrroline-5-carboxylate reductase 3 (288 aa).

Belongs to the pyrroline-5-carboxylate reductase family. As to quaternary structure, homodecamer; composed of 5 homodimers.

It is found in the cytoplasm. The catalysed reaction is L-proline + NADP(+) = (S)-1-pyrroline-5-carboxylate + NADPH + 2 H(+). The enzyme catalyses L-proline + NAD(+) = (S)-1-pyrroline-5-carboxylate + NADH + 2 H(+). It participates in amino-acid biosynthesis; L-proline biosynthesis; L-proline from L-glutamate 5-semialdehyde: step 1/1. In terms of biological role, oxidoreductase that catalyzes the last step in proline biosynthesis, which corresponds to the reduction of pyrroline-5-carboxylate (P5C) to L-proline using NAD(P)H. Proline is synthesized from either glutamate or ornithine; both are converted to P5C, and then to proline via pyrroline-5-carboxylate reductases (PYCRs). PYCR3 is exclusively linked to the biosynthesis of proline from ornithine. The chain is Pyrroline-5-carboxylate reductase 3 from Danio rerio (Zebrafish).